Here is a 665-residue protein sequence, read N- to C-terminus: Methionine--tRNA ligase (665 aa).

The 'HIGH' region motif lies at Tyr-13–Ser-23. The 'KMSKS' region signature appears at Lys-309–Ser-313. Lys-312 lines the ATP pocket. In terms of domain architecture, tRNA-binding spans Asp-562–Gly-665.

It belongs to the class-I aminoacyl-tRNA synthetase family. MetG type 2B subfamily. In terms of assembly, homodimer.

It is found in the cytoplasm. The catalysed reaction is tRNA(Met) + L-methionine + ATP = L-methionyl-tRNA(Met) + AMP + diphosphate. Is required not only for elongation of protein synthesis but also for the initiation of all mRNA translation through initiator tRNA(fMet) aminoacylation. This chain is Methionine--tRNA ligase (metG), found in Streptococcus pneumoniae serotype 4 (strain ATCC BAA-334 / TIGR4).